A 320-amino-acid chain; its full sequence is Heterogeneous nuclear ribonucleoprotein A1-like 2 (320 aa).

Residues 4–94 (SASPKEPEQL…EPKRAVSRED (91 aa)) form a globular A domain region. 2 positions are modified to phosphoserine: Ser-6 and Ser-22. 2 consecutive RRM domains span residues 14–97 (RKLF…DSQR) and 105–184 (KKIF…LPKQ). A globular B domain region spans residues 95–185 (SQRPGAHLTV…EVRKALPKQE (91 aa)). The disordered stretch occupies residues 181-216 (LPKQEMASASSSQRGRRGSGNFGGGRGDGFGGNDNF). Asymmetric dimethylarginine; alternate occurs at positions 194, 206, 218, and 225. Residues Arg-194, Arg-206, Arg-218, and Arg-225 each carry the omega-N-methylarginine; alternate modification. Gly residues predominate over residues 198–216 (GSGNFGGGRGDGFGGNDNF). Residues 218-240 (RGGNFSGRGGFGGSCGGGGYGGS) are RNA-binding RGG-box. The tract at residues 268–305 (NQSSNFGPMKGGNFGGRSSGPYGGGGQYFAKPQNQGGY) is nuclear targeting sequence. Residues 271–320 (SNFGPMKGGNFGGRSSGPYGGGGQYFAKPQNQGGYGVSSSSSSYGSGRRF) are disordered. The span at 276–294 (MKGGNFGGRSSGPYGGGGQ) shows a compositional bias: gly residues. Arg-284 is modified (omega-N-methylarginine). Lys-298 carries the post-translational modification N6-acetyllysine. A compositionally biased stretch (low complexity) spans 307-320 (VSSSSSSYGSGRRF).

The protein resides in the nucleus. Its subcellular location is the cytoplasm. In terms of biological role, involved in the packaging of pre-mRNA into hnRNP particles, transport of poly(A) mRNA from the nucleus to the cytoplasm and may modulate splice site selection. The protein is Heterogeneous nuclear ribonucleoprotein A1-like 2 (HNRNPA1L2) of Homo sapiens (Human).